Reading from the N-terminus, the 739-residue chain is Pre-mRNA-splicing factor ATP-dependent RNA helicase ddx-15 (739 aa).

Residues 1 to 19 show a composition bias toward basic and acidic residues; it reads MSSRHRLDLDGSGRGDRRR. The interval 1–49 is disordered; that stretch reads MSSRHRLDLDGSGRGDRRRSPNRRSRSRSRSPHRRSSPDRKRQIGAVGN. Over residues 20–35 the composition is skewed to basic residues; that stretch reads SPNRRSRSRSRSPHRR. The Helicase ATP-binding domain maps to 86–257; sequence MELLRNNQCI…FEDCPLLSVP (172 aa). 99–106 is an ATP binding site; the sequence is GETGSGKT. Positions 204-207 match the DEAH box motif; sequence DEAH. Residues 282–462 form the Helicase C-terminal domain; sequence TVIQIHMVEE…SVVLQLKKLG (181 aa).

This sequence belongs to the DEAD box helicase family. DEAH subfamily. DDX15/PRP43 sub-subfamily.

It localises to the nucleus. It catalyses the reaction ATP + H2O = ADP + phosphate + H(+). Pre-mRNA processing factor involved in disassembly of spliceosomes after the release of mature mRNA. The polypeptide is Pre-mRNA-splicing factor ATP-dependent RNA helicase ddx-15 (Caenorhabditis elegans).